The primary structure comprises 245 residues: tRNA (guanine-N(7)-)-methyltransferase (245 aa).

S-adenosyl-L-methionine contacts are provided by residues G70, 93-94 (EI), 126-127 (NA), and L146. D149 is an active-site residue. An S-adenosyl-L-methionine-binding site is contributed by 224–226 (SEE).

Belongs to the class I-like SAM-binding methyltransferase superfamily. TrmB family.

It is found in the nucleus. It catalyses the reaction guanosine(46) in tRNA + S-adenosyl-L-methionine = N(7)-methylguanosine(46) in tRNA + S-adenosyl-L-homocysteine. It functions in the pathway tRNA modification; N(7)-methylguanine-tRNA biosynthesis. Functionally, catalyzes the formation of N(7)-methylguanine at position 46 (m7G46) in tRNA. In Aedes aegypti (Yellowfever mosquito), this protein is tRNA (guanine-N(7)-)-methyltransferase.